A 245-amino-acid polypeptide reads, in one-letter code: Alpha carbonic anhydrase 2 (245 aa).

Residues 1 to 23 form the signal peptide; the sequence is MDKISIRCFIFLVLTSFVTTVSC. One can recognise an Alpha-carbonic anhydrase domain in the interval 37–245; that stretch reads HEFSYEWNQE…THRYFLLFFT (209 aa). Cys62 and Cys222 are oxidised to a cystine. N-linked (GlcNAc...) asparagine glycosylation occurs at Asn95. The Proton acceptor role is filled by His103. Residue Asn120 is glycosylated (N-linked (GlcNAc...) asparagine). Zn(2+)-binding residues include His130, His132, and His149. The N-linked (GlcNAc...) asparagine glycan is linked to Asn156. A substrate-binding site is contributed by 218-219; sequence TT.

It belongs to the alpha-class carbonic anhydrase family. The cofactor is Zn(2+). In terms of processing, N-glycosylated. As to expression, expressed in stems and roots.

Its subcellular location is the plastid. The protein resides in the chloroplast stroma. The catalysed reaction is hydrogencarbonate + H(+) = CO2 + H2O. In terms of biological role, reversible hydration of carbon dioxide. The protein is Alpha carbonic anhydrase 2 (ACA2) of Arabidopsis thaliana (Mouse-ear cress).